Here is a 132-residue protein sequence, read N- to C-terminus: MRAIKAKIPRSVHTATRLEVADNTGARLVEVISVLKYRGRKNRMPKAGIGDIFIGSVKKGTPEMRKTIVRCVVIRQKKEYRRPSGLRVSFEDNACVLVDDNNDPKGTEIKGPVAREVAERYAKIGSTATIIV.

It belongs to the universal ribosomal protein uL14 family. As to quaternary structure, part of the 50S ribosomal subunit. Forms a cluster with proteins L3 and L24e, part of which may contact the 16S rRNA in 2 intersubunit bridges.

Functionally, binds to 23S rRNA. Forms part of two intersubunit bridges in the 70S ribosome. This chain is Large ribosomal subunit protein uL14, found in Methanocella arvoryzae (strain DSM 22066 / NBRC 105507 / MRE50).